Here is a 366-residue protein sequence, read N- to C-terminus: Probable glucuronokinase 2 (366 aa).

Proline 126–alanine 136 serves as a coordination point for ATP. The active-site Proton acceptor is aspartate 179.

It belongs to the GHMP kinase family. Mg(2+) serves as cofactor. Mn(2+) is required as a cofactor. It depends on Co(2+) as a cofactor.

It carries out the reaction D-glucuronate + ATP = 1-phospho-alpha-D-glucuronate + ADP + H(+). In terms of biological role, sugar-1-kinase with a strict substrate specificity for D-glucuronic acid and ATP. Involved in the biosynthesis of UDP-glucuronic acid (UDP-GlcA), providing nucleotide sugars for cell-wall polymers. May be also involved in a salvage pathway for glucuronic acid. The sequence is that of Probable glucuronokinase 2 (GLCAK2) from Arabidopsis thaliana (Mouse-ear cress).